Reading from the N-terminus, the 268-residue chain is Interleukin-1 alpha (268 aa).

A propeptide spanning residues M1–R112 is cleaved from the precursor. K82 is subject to N6-acetyllysine. The nuclear localization signal (NLS) stretch occupies residues K82 to L86. At S87 the chain carries Phosphoserine. N102 and N141 each carry an N-linked (GlcNAc...) asparagine glycan.

This sequence belongs to the IL-1 family. As to quaternary structure, monomer. Interacts with TMED10; the interaction mediates the translocation from the cytoplasm into the ERGIC (endoplasmic reticulum-Golgi intermediate compartment) and thereby secretion. Interacts with IL1R1. Interacts with S100A13; this interaction is the first step in the export of IL1A, followed by direct translocation of this complex across the plasma membrane. Acetylated within its nuclear localization sequence, which impacts subcellular localization. In terms of processing, proteolytic processed by CAPN1 in a calcium-dependent manner. Cleavage from 31 kDa precursor to 18 kDa biologically active molecules. Post-translationally, phosphorylated. Phosphorylation greatly enhances susceptibility to digestion and promotes the conversion of pre-IL1A alpha to the biologically active IL1A.

Its subcellular location is the nucleus. The protein localises to the cytoplasm. It localises to the secreted. Its function is as follows. Cytokine constitutively present intracellularly in nearly all resting non-hematopoietic cells that plays an important role in inflammation and bridges the innate and adaptive immune systems. After binding to its receptor IL1R1 together with its accessory protein IL1RAP, forms the high affinity interleukin-1 receptor complex. Signaling involves the recruitment of adapter molecules such as MYD88, IRAK1 or IRAK4. In turn, mediates the activation of NF-kappa-B and the three MAPK pathways p38, p42/p44 and JNK pathways. Within the cell, acts as an alarmin and cell death results in its liberation in the extracellular space after disruption of the cell membrane to induce inflammation and alert the host to injury or damage. In addition to its role as a danger signal, which occurs when the cytokine is passively released by cell necrosis, directly senses DNA damage and acts as signal for genotoxic stress without loss of cell integrity. The sequence is that of Interleukin-1 alpha (IL1A) from Lama glama (Llama).